We begin with the raw amino-acid sequence, 142 residues long: MALTQAEKAAVTTIWAKVATQIESIGLESLERLFASYPQTKTYFPHFDVSQGSVQLRGHGSKVLNAIGEAVKNIDDIRGALAKLSELHAYILRVDPVNFKLLSHCILCSVAARYPSDFTPEVHAAWDKFLSSISSVLTEKYR.

The Globin domain maps to 2 to 142; it reads ALTQAEKAAV…ISSVLTEKYR (141 aa). Residues His59 and His88 each coordinate heme b.

The protein belongs to the globin family.

In terms of biological role, the pi' chain is the counterpart of the alpha chain in the major early embryonic hemoglobin P. In Gallus gallus (Chicken), this protein is Hemoglobin subunit pi.